The sequence spans 1227 residues: ATP-dependent helicase/nuclease subunit A (1227 aa).

Residues 37–503 (QKRTAEQIEA…ILLKENFRSQ (467 aa)) form the UvrD-like helicase ATP-binding domain. 58–65 (ASAGSGKT) lines the ATP pocket. Residues 532–816 (SLVAGSPGQK…QLMTIHKSKG (285 aa)) form the UvrD-like helicase C-terminal domain.

This sequence belongs to the helicase family. AddA subfamily. As to quaternary structure, heterodimer of AddA and AddB/RexB. Mg(2+) serves as cofactor.

The enzyme catalyses Couples ATP hydrolysis with the unwinding of duplex DNA by translocating in the 3'-5' direction.. It catalyses the reaction ATP + H2O = ADP + phosphate + H(+). In terms of biological role, the heterodimer acts as both an ATP-dependent DNA helicase and an ATP-dependent, dual-direction single-stranded exonuclease. Recognizes the chi site generating a DNA molecule suitable for the initiation of homologous recombination. The AddA nuclease domain is required for chi fragment generation; this subunit has the helicase and 3' -&gt; 5' nuclease activities. In Streptococcus suis (strain 98HAH33), this protein is ATP-dependent helicase/nuclease subunit A.